A 490-amino-acid polypeptide reads, in one-letter code: MRTDAAGGTYLDPSAADVTALLERVHLVGIGGAGMSGIARILLARGRQVSGSDARDSRTVLALKAQGAHIALGHRAENIEQFDGDPTAVVVSTAIRRDNPELVAAQERGVPVLRRAEALAALMADHRVACVAGTHGKTSTTSMLTVALQHCRLDPSFAIGGDLNESGANAHHGDGGVFVAEADESDGSFLVFAPSVAVVTNVEPDHLDHHGTAEAYTEVFQRFVERIEPGGVLIACADDAGAALLADQAEAAGVRVRRYGHEVTADGDARMVGYRPEHGSGVVTVEVSGDRLDVQVAVPGEHMAANAVAALLAGLELGAPLEGLLEGLAAFGGVRRRFEFKGRADGVRVYDDYAHHPTEVDAQLRAARPVVGDGRLVVVFQPHLYSRTAAFSGEFATALGLADEVVVLDVYGAREDPQPGVTGELIAESVPLPAERVHYEASFTAAAPLVAGLVQPGDLVLTMGAGDVTMLGPEILAEVERESGATEEDA.

133–139 (GTHGKTS) is a binding site for ATP.

Belongs to the MurCDEF family.

The protein resides in the cytoplasm. It carries out the reaction UDP-N-acetyl-alpha-D-muramate + L-alanine + ATP = UDP-N-acetyl-alpha-D-muramoyl-L-alanine + ADP + phosphate + H(+). It functions in the pathway cell wall biogenesis; peptidoglycan biosynthesis. Its function is as follows. Cell wall formation. The chain is UDP-N-acetylmuramate--L-alanine ligase from Saccharopolyspora erythraea (strain ATCC 11635 / DSM 40517 / JCM 4748 / NBRC 13426 / NCIMB 8594 / NRRL 2338).